Consider the following 575-residue polypeptide: Sodium/hydrogen exchanger 8 (575 aa).

Helical transmembrane passes span 54 to 74 (MTIF…HLLI), 78 to 98 (LHFL…GAVI), 117 to 137 (PNMF…YSLH), 150 to 170 (LFAV…IYFL), 185 to 205 (FAFG…IFNA), 255 to 275 (LGYF…TGLI), 305 to 325 (GLAE…GIVM), 348 to 368 (VAFL…FSFP), 373 to 393 (ISFV…NIFP), 411 to 431 (MFIM…SLHL), and 445 to 465 (TTII…MPLI). At T504 the chain carries Phosphothreonine. Residues S565 and S567 each carry the phosphoserine modification.

Belongs to the monovalent cation:proton antiporter 1 (CPA1) transporter (TC 2.A.36) family. In terms of tissue distribution, intestine and kidneys.

It is found in the golgi apparatus membrane. Its subcellular location is the golgi apparatus. The protein localises to the trans-Golgi network membrane. The protein resides in the endosome. It localises to the multivesicular body membrane. It is found in the apical cell membrane. Its subcellular location is the cytoplasmic vesicle. The protein localises to the secretory vesicle. The protein resides in the acrosome. The enzyme catalyses Na(+)(in) + H(+)(out) = Na(+)(out) + H(+)(in). Its activity is regulated as follows. Expression and activity are regulated by acid media by increasing the rate of trafficking to the apical membrane. Inhibited by HOE694 and S3226. In terms of biological role, na(+)/H(+) antiporter. Mediates the electoneutral exchange of intracellular H(+) ions for extracellular Na(+) in 1:1 stoichiometry. Acts as an Na(+)/H(+) exchanger in the trans-Golgi. Contributes to the regulation of pH regulation of Golgi apparatus, and consequently, in protein trafficking and endosomal morphology. In germ cells, plays a crucial role in acrosome biogenesis and sperm development, probably by playing a role in the fusion of the Golgi-derived vesicles that form the acrosomal cap. Can also be active at the cell surface of specialized cells. In the small intestine, at the cell membrane, plays a major physiological role in transepithelial absorption of Na(+) and regulates intracellular pH homeostasis of intestinal epithelial cells. Acts as an important regulator of mucosal integrity in the intestine and in the stomach, could mediate the pH fluctuation necessary for mucin exocytosis or assist membrane trafficking of other proteins. Plays a role in photoreceptor survival and in the maintenance of intracellular pH homeostasis in retinal pigment epithelium (RPE cells). In Rattus norvegicus (Rat), this protein is Sodium/hydrogen exchanger 8 (Slc9a8).